Here is a 156-residue protein sequence, read N- to C-terminus: Keratin-associated protein 13-4 (156 aa).

4 repeat units span residues 37–46 (CQLGSSLYRN), 47–56 (CQKTCWEPTS), 57–66 (CRKSCYRRRT), and 73–82 (CQTTCSRSLG). The tract at residues 37-82 (CQLGSSLYRNCQKTCWEPTSCRKSCYRRRTSMLCSPCQTTCSRSLG) is 4 X 10 AA approximate repeats.

The protein belongs to the PMG family. Interacts with hair keratins.

In terms of biological role, in the hair cortex, hair keratin intermediate filaments are embedded in an interfilamentous matrix, consisting of hair keratin-associated proteins (KRTAP), which are essential for the formation of a rigid and resistant hair shaft through their extensive disulfide bond cross-linking with abundant cysteine residues of hair keratins. The matrix proteins include the high-sulfur and high-glycine-tyrosine keratins. In Macaca fascicularis (Crab-eating macaque), this protein is Keratin-associated protein 13-4 (KRTAP13-4).